Reading from the N-terminus, the 135-residue chain is Nitrogen fixation protein NifU 1 (135 aa).

The segment covering 1-10 (MRDMQDDDTK) has biased composition (basic and acidic residues). The tract at residues 1–29 (MRDMQDDDTKSPAPPPAAAAAARRAAGQA) is disordered. Residues 18-29 (AAAAARRAAGQA) show a composition bias toward low complexity.

The protein belongs to the NifU family.

May be involved in the formation or repair of [Fe-S] clusters present in iron-sulfur proteins. The chain is Nitrogen fixation protein NifU 1 (nifU1) from Rhodobacter capsulatus (Rhodopseudomonas capsulata).